The primary structure comprises 215 residues: MOB kinase activator-like 1B (215 aa).

The tract at residues 1-25 is disordered; the sequence is MSLFGLGRNQKTFRPKKSAPSGTKG. Zn(2+) contacts are provided by Cys79, Cys84, His161, and His166.

Belongs to the MOB1/phocein family. As to quaternary structure, interacts with SIK1. Expression is detected along the vasculature in cotyledons, hypocotyls and roots of 3- to 4-day-old seedlings.

The chain is MOB kinase activator-like 1B from Arabidopsis thaliana (Mouse-ear cress).